The following is an 82-amino-acid chain: Protein CYSTEINE-RICH TRANSMEMBRANE MODULE 13 (82 aa).

Residues 1-58 (MYHQEQHPVGAPPPQGYPPKDGYPPAGYPPAGYPPPGYAQGYPAQGYPPPQYSQAPQQ) are disordered. Positions 26–37 (AGYPPAGYPPPG) are enriched in pro residues. Residues 59–76 (KQNAGMLEGCLAALCCCC) form a helical membrane-spanning segment.

It belongs to the CYSTM1 family. In terms of assembly, homodimer and heterodimers. Interacts with CYSTM7, CYTSM3, CYTSM4, CYTSM5, CYTSM6, CYTSM9, CYTSM10 and CYTSM11. Binds weakly to CYSTM1 and CYSTM2. In terms of tissue distribution, expressed in root meristem, root vasculature, leaf vasculature and floral organ primordia. Mostly expressed in roots and flowers and, to a lower extent, in stems, siliques and leaves.

Its subcellular location is the cell membrane. Its function is as follows. Required for the promotion of megasporogenesis, or promotion of germ cell formation from somatic precursor cells. Acts redundantly with WIH2. Functions in a genetic pathway downstream of SPL/NZZ and WUS and together with TRN2 in promoting megasporogenesis. Involved in resistance to abiotic stress. The chain is Protein CYSTEINE-RICH TRANSMEMBRANE MODULE 13 from Arabidopsis thaliana (Mouse-ear cress).